A 648-amino-acid chain; its full sequence is Macrolide export ATP-binding/permease protein MacB (648 aa).

The 239-residue stretch at leucine 5–threonine 243 folds into the ABC transporter domain. Residue glycine 41–serine 48 coordinates ATP. 5 consecutive transmembrane segments (helical) span residues leucine 273–glycine 293, alanine 417–alanine 437, leucine 523–isoleucine 543, valine 577–methionine 597, and leucine 611–leucine 631.

It belongs to the ABC transporter superfamily. Macrolide exporter (TC 3.A.1.122) family. In terms of assembly, homodimer. Part of the tripartite efflux system MacAB-TolC, which is composed of an inner membrane transporter, MacB, a periplasmic membrane fusion protein, MacA, and an outer membrane component, TolC. The complex forms a large protein conduit and can translocate molecules across both the inner and outer membranes. Interacts with MacA.

It is found in the cell inner membrane. Part of the tripartite efflux system MacAB-TolC. MacB is a non-canonical ABC transporter that contains transmembrane domains (TMD), which form a pore in the inner membrane, and an ATP-binding domain (NBD), which is responsible for energy generation. Confers resistance against macrolides. The protein is Macrolide export ATP-binding/permease protein MacB of Salmonella typhi.